Consider the following 184-residue polypeptide: ADP-ribosylation factor-like protein 2 (184 aa).

Gly-2 carries the N-myristoyl glycine lipid modification. Residues 23–30 (GLDNAGKT), 66–70 (DVGGQ), and 125–128 (NKQD) each bind GTP.

It belongs to the small GTPase superfamily. Arf family. As to expression, ubiquitously expressed.

GTP-binding protein involved in protein trafficking; may modulate vesicle budding and uncoating within the Golgi apparatus. This is ADP-ribosylation factor-like protein 2 (Arl2) from Drosophila melanogaster (Fruit fly).